The primary structure comprises 329 residues: Dolichyl-diphosphooligosaccharide--protein glycosyltransferase subunit MAGT1 (329 aa).

Residues 1 to 23 (MAGLKGLLFGGILFAMCGGLSEG) form the signal peptide. At 24–178 (QKKKEMVLSD…DVNIRVIRPP (155 aa)) the chain is on the extracellular side. The Thioredoxin domain occupies 41–169 (WASKRPVIRM…LARWVADRTD (129 aa)). Asn-65 is a glycosylation site (N-linked (GlcNAc...) asparagine). Cysteines 81 and 84 form a disulfide. Residues 179-199 (NYAGPLMLGLLLAVIGGLVYL) traverse the membrane as a helical segment. The Cytoplasmic segment spans residues 200–212 (RRSNLDFLNNKTG). Residues 213–233 (WALAALCFVLAMTSGQMWNHI) form a helical membrane-spanning segment. Residues 234–258 (RGPPYAHKNPHTNQVNYIHGSSQAQ) lie on the Extracellular side of the membrane. Residues 259 to 279 (FVAETHIVLLFNGAVTLGMVL) form a helical membrane-spanning segment. Residues 280–294 (LHEAATSDLDVGKRK) lie on the Cytoplasmic side of the membrane. The chain crosses the membrane as a helical span at residues 295–315 (IMCIAGITLVVIFFSWLLSVF). Over 316 to 329 (RSKYHGYPYSFLMT) the chain is Extracellular.

It belongs to the OST3/OST6 family. As to quaternary structure, accessory component of the STT3B-containing form of the oligosaccharyltransferase (OST) complex.

The protein resides in the cell membrane. It is found in the endoplasmic reticulum. It localises to the endoplasmic reticulum membrane. Its pathway is protein modification; protein glycosylation. Functionally, accessory component of the STT3B-containing form of the N-oligosaccharyl transferase (OST) complex which catalyzes the transfer of a high mannose oligosaccharide from a lipid-linked oligosaccharide donor to an asparagine residue within an Asn-X-Ser/Thr consensus motif in nascent polypeptide chains. May be involved in substrate-specific N-glycosylation involving acceptor sites that are near cysteine residues. Could indirectly play a role in Mg(2+) transport in epithelial cells. The protein is Dolichyl-diphosphooligosaccharide--protein glycosyltransferase subunit MAGT1 of Xenopus laevis (African clawed frog).